The chain runs to 356 residues: UDP-3-O-acylglucosamine N-acyltransferase (356 aa).

H242 serves as the catalytic Proton acceptor.

The protein belongs to the transferase hexapeptide repeat family. LpxD subfamily. As to quaternary structure, homotrimer.

The catalysed reaction is a UDP-3-O-[(3R)-3-hydroxyacyl]-alpha-D-glucosamine + a (3R)-hydroxyacyl-[ACP] = a UDP-2-N,3-O-bis[(3R)-3-hydroxyacyl]-alpha-D-glucosamine + holo-[ACP] + H(+). Its pathway is bacterial outer membrane biogenesis; LPS lipid A biosynthesis. Functionally, catalyzes the N-acylation of UDP-3-O-acylglucosamine using 3-hydroxyacyl-ACP as the acyl donor. Is involved in the biosynthesis of lipid A, a phosphorylated glycolipid that anchors the lipopolysaccharide to the outer membrane of the cell. The sequence is that of UDP-3-O-acylglucosamine N-acyltransferase from Acinetobacter baumannii (strain AB0057).